The following is a 305-amino-acid chain: ATP synthase gamma chain (305 aa).

It belongs to the ATPase gamma chain family. As to quaternary structure, F-type ATPases have 2 components, CF(1) - the catalytic core - and CF(0) - the membrane proton channel. CF(1) has five subunits: alpha(3), beta(3), gamma(1), delta(1), epsilon(1). CF(0) has three main subunits: a, b and c.

The protein resides in the cell membrane. Its function is as follows. Produces ATP from ADP in the presence of a proton gradient across the membrane. The gamma chain is believed to be important in regulating ATPase activity and the flow of protons through the CF(0) complex. This chain is ATP synthase gamma chain, found in Streptomyces griseus subsp. griseus (strain JCM 4626 / CBS 651.72 / NBRC 13350 / KCC S-0626 / ISP 5235).